The following is a 188-amino-acid chain: Elongation factor P (188 aa).

K34 is modified (N6-(3,6-diaminohexanoyl)-5-hydroxylysine).

The protein belongs to the elongation factor P family. In terms of processing, may be beta-lysylated on the epsilon-amino group of Lys-34 by the combined action of EpmA and EpmB, and then hydroxylated on the C5 position of the same residue by EpmC (if this protein is present). Lysylation is critical for the stimulatory effect of EF-P on peptide-bond formation. The lysylation moiety may extend toward the peptidyltransferase center and stabilize the terminal 3-CCA end of the tRNA. Hydroxylation of the C5 position on Lys-34 may allow additional potential stabilizing hydrogen-bond interactions with the P-tRNA.

The protein resides in the cytoplasm. Its pathway is protein biosynthesis; polypeptide chain elongation. Involved in peptide bond synthesis. Alleviates ribosome stalling that occurs when 3 or more consecutive Pro residues or the sequence PPG is present in a protein, possibly by augmenting the peptidyl transferase activity of the ribosome. Modification of Lys-34 is required for alleviation. The protein is Elongation factor P of Pectobacterium atrosepticum (strain SCRI 1043 / ATCC BAA-672) (Erwinia carotovora subsp. atroseptica).